The sequence spans 425 residues: GTPase Obg (425 aa).

The Obg domain occupies 1 to 158 (MFRDSAKIYV…YSLILEMKMI (158 aa)). The OBG-type G domain occupies 159–330 (ADVGLVGYPN…LLYAVSETLK (172 aa)). Residues 165–172 (GYPNVGKS), 190–194 (FTTLV), 212–215 (DIPG), 282–285 (NKMD), and 311–313 (SAA) each bind GTP. 2 residues coordinate Mg(2+): serine 172 and threonine 192. The OCT domain maps to 348 to 425 (YKVQEEKPFE…IYDTEFDYTR (78 aa)).

Belongs to the TRAFAC class OBG-HflX-like GTPase superfamily. OBG GTPase family. As to quaternary structure, monomer. Requires Mg(2+) as cofactor.

Its subcellular location is the cytoplasm. Functionally, an essential GTPase which binds GTP, GDP and possibly (p)ppGpp with moderate affinity, with high nucleotide exchange rates and a fairly low GTP hydrolysis rate. Plays a role in control of the cell cycle, stress response, ribosome biogenesis and in those bacteria that undergo differentiation, in morphogenesis control. In Ruminiclostridium cellulolyticum (strain ATCC 35319 / DSM 5812 / JCM 6584 / H10) (Clostridium cellulolyticum), this protein is GTPase Obg.